We begin with the raw amino-acid sequence, 463 residues long: 23S rRNA (uracil(1939)-C(5))-methyltransferase RlmD (463 aa).

The TRAM domain occupies 6–76; sequence KSRKPQQPEY…KRLEEAEMVA (71 aa). Residues cysteine 90, cysteine 96, cysteine 99, and cysteine 178 each coordinate [4Fe-4S] cluster. Glutamine 288, phenylalanine 317, asparagine 322, glutamate 341, aspartate 368, and aspartate 389 together coordinate S-adenosyl-L-methionine. The Nucleophile role is filled by cysteine 415.

It belongs to the class I-like SAM-binding methyltransferase superfamily. RNA M5U methyltransferase family. RlmD subfamily.

The catalysed reaction is uridine(1939) in 23S rRNA + S-adenosyl-L-methionine = 5-methyluridine(1939) in 23S rRNA + S-adenosyl-L-homocysteine + H(+). Functionally, catalyzes the formation of 5-methyl-uridine at position 1939 (m5U1939) in 23S rRNA. The chain is 23S rRNA (uracil(1939)-C(5))-methyltransferase RlmD from Acinetobacter baumannii (strain SDF).